The sequence spans 221 residues: Large ribosomal subunit protein uL3 (221 aa).

The protein belongs to the universal ribosomal protein uL3 family. As to quaternary structure, part of the 50S ribosomal subunit. Forms a cluster with proteins L14 and L19.

In terms of biological role, one of the primary rRNA binding proteins, it binds directly near the 3'-end of the 23S rRNA, where it nucleates assembly of the 50S subunit. This is Large ribosomal subunit protein uL3 from Chlamydia felis (strain Fe/C-56) (Chlamydophila felis).